We begin with the raw amino-acid sequence, 116 residues long: Holo-[acyl-carrier-protein] synthase (116 aa).

Residues Asp5 and Glu50 each coordinate Mg(2+).

It belongs to the P-Pant transferase superfamily. AcpS family. Requires Mg(2+) as cofactor.

The protein resides in the cytoplasm. The enzyme catalyses apo-[ACP] + CoA = holo-[ACP] + adenosine 3',5'-bisphosphate + H(+). Its function is as follows. Transfers the 4'-phosphopantetheine moiety from coenzyme A to a Ser of acyl-carrier-protein. The chain is Holo-[acyl-carrier-protein] synthase from Nitratiruptor sp. (strain SB155-2).